The primary structure comprises 341 residues: S-adenosylmethionine:tRNA ribosyltransferase-isomerase (341 aa).

This sequence belongs to the QueA family. In terms of assembly, monomer.

The protein localises to the cytoplasm. It catalyses the reaction 7-aminomethyl-7-carbaguanosine(34) in tRNA + S-adenosyl-L-methionine = epoxyqueuosine(34) in tRNA + adenine + L-methionine + 2 H(+). The protein operates within tRNA modification; tRNA-queuosine biosynthesis. Its function is as follows. Transfers and isomerizes the ribose moiety from AdoMet to the 7-aminomethyl group of 7-deazaguanine (preQ1-tRNA) to give epoxyqueuosine (oQ-tRNA). This Clostridium beijerinckii (strain ATCC 51743 / NCIMB 8052) (Clostridium acetobutylicum) protein is S-adenosylmethionine:tRNA ribosyltransferase-isomerase.